Here is a 274-residue protein sequence, read N- to C-terminus: Large ribosomal subunit protein uL2 (274 aa).

The disordered stretch occupies residues 197–274; it reads NSDHALEKSG…SKYIIERRKK (78 aa). Composition is skewed to basic residues over residues 207–220 and 244–274; these read KAGRSRWLGRRPHN and PRSRKGLYAKGLKTRAPKKHSSKYIIERRKK.

The protein belongs to the universal ribosomal protein uL2 family. In terms of assembly, part of the 50S ribosomal subunit. Forms a bridge to the 30S subunit in the 70S ribosome.

One of the primary rRNA binding proteins. Required for association of the 30S and 50S subunits to form the 70S ribosome, for tRNA binding and peptide bond formation. It has been suggested to have peptidyltransferase activity; this is somewhat controversial. Makes several contacts with the 16S rRNA in the 70S ribosome. The protein is Large ribosomal subunit protein uL2 of Porphyromonas gingivalis (strain ATCC BAA-308 / W83).